The primary structure comprises 290 residues: ADP-dependent (S)-NAD(P)H-hydrate dehydratase (290 aa).

One can recognise a YjeF C-terminal domain in the interval 5 to 278; that stretch reads NQTLLEKVII…RYLPKIMKII (274 aa). (6S)-NADPHX-binding residues include A40, G103, and H152. Residue G218 coordinates AMP. Position 219 (D219) interacts with (6S)-NADPHX.

Belongs to the NnrD/CARKD family. In terms of assembly, homotetramer. It depends on Mg(2+) as a cofactor.

The catalysed reaction is (6S)-NADHX + ADP = AMP + phosphate + NADH + H(+). It catalyses the reaction (6S)-NADPHX + ADP = AMP + phosphate + NADPH + H(+). In terms of biological role, catalyzes the dehydration of the S-form of NAD(P)HX at the expense of ADP, which is converted to AMP. Together with NAD(P)HX epimerase, which catalyzes the epimerization of the S- and R-forms, the enzyme allows the repair of both epimers of NAD(P)HX, a damaged form of NAD(P)H that is a result of enzymatic or heat-dependent hydration. In Streptococcus pneumoniae (strain ATCC BAA-255 / R6), this protein is ADP-dependent (S)-NAD(P)H-hydrate dehydratase.